The following is a 230-amino-acid chain: UPF0173 metal-dependent hydrolase RSKD131_0588 (230 aa).

This sequence belongs to the UPF0173 family.

This chain is UPF0173 metal-dependent hydrolase RSKD131_0588, found in Cereibacter sphaeroides (strain KD131 / KCTC 12085) (Rhodobacter sphaeroides).